Consider the following 431-residue polypeptide: Adenylosuccinate synthetase (431 aa).

GTP is bound by residues 13–19 and 41–43; these read GDEGKGK and GHT. Asp14 (proton acceptor) is an active-site residue. Mg(2+) contacts are provided by Asp14 and Gly41. IMP-binding positions include 14-17, 39-42, Thr130, Arg144, Gln225, Thr240, and Arg304; these read DEGK and NAGH. His42 serves as the catalytic Proton donor. 300–306 is a substrate binding site; the sequence is ATTGRKR. GTP-binding positions include Arg306, 332-334, and 415-417; these read KLD and STG.

The protein belongs to the adenylosuccinate synthetase family. Homodimer. Mg(2+) serves as cofactor.

Its subcellular location is the cytoplasm. It catalyses the reaction IMP + L-aspartate + GTP = N(6)-(1,2-dicarboxyethyl)-AMP + GDP + phosphate + 2 H(+). It functions in the pathway purine metabolism; AMP biosynthesis via de novo pathway; AMP from IMP: step 1/2. Plays an important role in the de novo pathway of purine nucleotide biosynthesis. Catalyzes the first committed step in the biosynthesis of AMP from IMP. The protein is Adenylosuccinate synthetase of Shewanella woodyi (strain ATCC 51908 / MS32).